Here is a 218-residue protein sequence, read N- to C-terminus: Large ribosomal subunit protein uL3 (218 aa).

The interval 126-169 (HGFSRGPMTHGSKNHRQPGSIGAGTTPGRIYPGKRMSGRYGGKK) is disordered.

The protein belongs to the universal ribosomal protein uL3 family. In terms of assembly, part of the 50S ribosomal subunit. Forms a cluster with proteins L14 and L19.

Its function is as follows. One of the primary rRNA binding proteins, it binds directly near the 3'-end of the 23S rRNA, where it nucleates assembly of the 50S subunit. This is Large ribosomal subunit protein uL3 from Synechococcus sp. (strain CC9902).